A 479-amino-acid chain; its full sequence is MPIVARSSRVPWVIKYRPKRVEDVVNQDQAKKILVPWFKAWLEGRKPDKRAALLYGPPGVGKTSLVEAIASEFNLEMIELNASDYRRRSDIERIVGAASRKRSMFKRGVVILLDEVDGINPREDAGGIEALLSVIKTTENPIVMTANDPWKDFLRPLREVSLMVEFRPLTLTHIVAVLQRICEAERIECEREALRYIAERSEGDLRSAINDLQAVAEGYGRVTLTLAREIVRGREKSIDIWRTLNQVFYKPRQAWMARKAVSQSEKDYEELIAWINDNIPRKYGEPSDLFRAFDALARATVFLGRAKFGGNWELLSYVFDLMGPGVAYARMEGEVLKTRYSYPEKIRMMAQLRGVRETREKLAEVLAKRLLMSRRAVKTEVLPILHYIFRSSRDPTKPAMIALEYGLTEKMVELLAGQRKSEILKAMATVKKARLGEKPLEPQEAKARRRGEKASRDEGRKAGKRERKGVGLDFFLGEQ.

An ATP-binding site is contributed by 56–63 (GPPGVGKT). Basic and acidic residues predominate over residues 435–461 (LGEKPLEPQEAKARRRGEKASRDEGRK). A disordered region spans residues 435–479 (LGEKPLEPQEAKARRRGEKASRDEGRKAGKRERKGVGLDFFLGEQ).

Belongs to the activator 1 small subunits family. RfcL subfamily. As to quaternary structure, heteromultimer composed of small subunits (RfcS) and large subunits (RfcL).

Part of the RFC clamp loader complex which loads the PCNA sliding clamp onto DNA. This chain is Replication factor C large subunit, found in Aeropyrum pernix (strain ATCC 700893 / DSM 11879 / JCM 9820 / NBRC 100138 / K1).